The sequence spans 319 residues: Urease accessory protein UreD (319 aa).

A disordered region spans residues 284–319 (RLSTPQPPREWPLQEEGTFSNERFTKDHQSPSASPH).

The protein belongs to the UreD family. In terms of assembly, ureD, UreF and UreG form a complex that acts as a GTP-hydrolysis-dependent molecular chaperone, activating the urease apoprotein by helping to assemble the nickel containing metallocenter of UreC. The UreE protein probably delivers the nickel.

The protein resides in the cytoplasm. Its function is as follows. Required for maturation of urease via the functional incorporation of the urease nickel metallocenter. The protein is Urease accessory protein UreD of Prochlorococcus marinus (strain MIT 9313).